A 620-amino-acid polypeptide reads, in one-letter code: Lamin-B2 (620 aa).

Residues 1 to 38 (MSPPSPGRRREQRRPRAAATMATPLPGRAGGPATPLSP) form a disordered region. Residues 1–48 (MSPPSPGRRREQRRPRAAATMATPLPGRAGGPATPLSPTRLSRLQEKE) form a head region. Thr23 and Thr34 each carry phosphothreonine. Ser37 is subject to Phosphoserine. Residues 46-402 (EKEELRELND…KLLEGEEERL (357 aa)) enclose the IF rod domain. Positions 49-83 (ELRELNDRLAHYIDRVRALELENDRLLLKISEKEE) are coil 1A. Residue Lys77 forms a Glycyl lysine isopeptide (Lys-Gly) (interchain with G-Cter in SUMO2) linkage. At Lys81 the chain carries N6-acetyllysine; alternate. A Glycyl lysine isopeptide (Lys-Gly) (interchain with G-Cter in SUMO2); alternate cross-link involves residue Lys81. The segment at 84–95 (VTTREVSGIKAL) is linker 1. Positions 96–229 (YESELADARR…DFRKSVFEEE (134 aa)) are coil 1B. Residues Lys195 and Lys255 each participate in a glycyl lysine isopeptide (Lys-Gly) (interchain with G-Cter in SUMO2) cross-link. The linker 2 stretch occupies residues 230–256 (VRETRRRHERRLVEVDSSRQQEYDFKM). The segment at 257–400 (AQALEELRSQ…YRKLLEGEEE (144 aa)) is coil 2. Phosphoserine is present on residues Ser316 and Ser407. Residues 399–464 (EERLKLSPSP…GTGGSGGFHL (66 aa)) form a disordered region. A tail region spans residues 401–620 (RLKLSPSPSS…RTTSRGCYVM (220 aa)). Positions 404–431 (LSPSPSSRVTVSRATSSSSGSLSATGRL) are enriched in low complexity. A glycan (O-linked (GlcNAc) threonine) is linked at Thr413. Phosphoserine occurs at positions 420, 422, 424, and 426. At Arg433 the chain carries Omega-N-methylarginine. A Nuclear localization signal motif is present at residues 435–440 (KRKRLE). The span at 444–453 (PLGSGPSVLG) shows a compositional bias: low complexity. The LTD domain occupies 462–579 (FHLAQQASAS…EEVAMRTVKK (118 aa)). A Glycyl lysine isopeptide (Lys-Gly) (interchain with G-Cter in SUMO2) cross-link involves residue Lys489. A Phosphoserine modification is found at Ser497. The segment at 581–620 (SVMRENENGEEEEEEAEFGEEDLFHQQGDPRTTSRGCYVM) is disordered. Acidic residues predominate over residues 588–601 (NGEEEEEEAEFGEE). Polar residues predominate over residues 609–620 (DPRTTSRGCYVM). At Cys617 the chain carries Cysteine methyl ester. Cys617 carries the S-farnesyl cysteine lipid modification. The propeptide at 618–620 (YVM) is removed in mature form.

Belongs to the intermediate filament family. Dimer. Lamin dimers then assemble into dimeric head-to-tail polymers. Ultimately, two head-to-tail polymers assemble laterally into a protofilament with a uniformly shaped rod of 3.5 nm in diameter. Interacts with TMEM43. Post-translationally, B-type lamins undergo a series of modifications, such as farnesylation and phosphorylation. Increased phosphorylation of the lamins occurs before envelope disintegration and probably plays a role in regulating lamin associations. In terms of processing, phosphorylation plays a key role in lamin organization, subcellular localization and nuclear envelope disintegration. Phosphorylation by CDK1 at Ser-37 and Ser-407 at the onset of mitosis drives lamin disassembly and nuclear envelope breakdown.

It is found in the nucleus lamina. Its function is as follows. Lamins are intermediate filament proteins that assemble into a filamentous meshwork, and which constitute the major components of the nuclear lamina, a fibrous layer on the nucleoplasmic side of the inner nuclear membrane. Lamins provide a framework for the nuclear envelope, bridging the nuclear envelope and chromatin, thereby playing an important role in nuclear assembly, chromatin organization, nuclear membrane and telomere dynamics. The structural integrity of the lamina is strictly controlled by the cell cycle, as seen by the disintegration and formation of the nuclear envelope in prophase and telophase, respectively. This is Lamin-B2 (LMNB2) from Homo sapiens (Human).